Reading from the N-terminus, the 356-residue chain is Dual-specificity RNA methyltransferase RlmN (356 aa).

The Proton acceptor role is filled by Glu89. In terms of domain architecture, Radical SAM core spans 108–341 (SHARYTICVS…CTIRESKGLD (234 aa)). A disulfide bond links Cys115 and Cys346. [4Fe-4S] cluster contacts are provided by Cys122, Cys126, and Cys129. S-adenosyl-L-methionine is bound by residues 172–173 (GE), Ser204, 227–229 (SLH), and Asn303. Catalysis depends on Cys346, which acts as the S-methylcysteine intermediate.

This sequence belongs to the radical SAM superfamily. RlmN family. The cofactor is [4Fe-4S] cluster.

It localises to the cytoplasm. The catalysed reaction is adenosine(2503) in 23S rRNA + 2 reduced [2Fe-2S]-[ferredoxin] + 2 S-adenosyl-L-methionine = 2-methyladenosine(2503) in 23S rRNA + 5'-deoxyadenosine + L-methionine + 2 oxidized [2Fe-2S]-[ferredoxin] + S-adenosyl-L-homocysteine. It catalyses the reaction adenosine(37) in tRNA + 2 reduced [2Fe-2S]-[ferredoxin] + 2 S-adenosyl-L-methionine = 2-methyladenosine(37) in tRNA + 5'-deoxyadenosine + L-methionine + 2 oxidized [2Fe-2S]-[ferredoxin] + S-adenosyl-L-homocysteine. In terms of biological role, specifically methylates position 2 of adenine 2503 in 23S rRNA and position 2 of adenine 37 in tRNAs. m2A2503 modification seems to play a crucial role in the proofreading step occurring at the peptidyl transferase center and thus would serve to optimize ribosomal fidelity. The protein is Dual-specificity RNA methyltransferase RlmN of Campylobacter jejuni (strain RM1221).